The following is a 215-amino-acid chain: Adenylate kinase (215 aa).

Position 10–15 (10–15) interacts with ATP; the sequence is GAGKGT. The tract at residues 30–59 is NMP; that stretch reads STGDMLRAAVKAGTELGLKAKSVMDSGGLV. Residues threonine 31, arginine 36, 57–59, 85–88, and glutamine 92 each bind AMP; these read GLV and GFPR. Positions 122–159 are LID; sequence GRRVHEASGRVYHTVYNPPKIAGKDDITGEDLVQRKDD. ATP-binding positions include arginine 123 and 132 to 133; that span reads VY. Positions 156 and 167 each coordinate AMP. Residue glycine 201 coordinates ATP.

It belongs to the adenylate kinase family. As to quaternary structure, monomer.

The protein resides in the cytoplasm. It carries out the reaction AMP + ATP = 2 ADP. Its pathway is purine metabolism; AMP biosynthesis via salvage pathway; AMP from ADP: step 1/1. Functionally, catalyzes the reversible transfer of the terminal phosphate group between ATP and AMP. Plays an important role in cellular energy homeostasis and in adenine nucleotide metabolism. This is Adenylate kinase from Pseudomonas fluorescens (strain ATCC BAA-477 / NRRL B-23932 / Pf-5).